The chain runs to 64 residues: uncharacterized protein (64 aa).

This is an uncharacterized protein from Saccharomyces cerevisiae (strain ATCC 204508 / S288c) (Baker's yeast).